Reading from the N-terminus, the 206-residue chain is Large ribosomal subunit protein uL4 (206 aa).

Residues 43 to 78 are disordered; the sequence is ARSGNRKQKDREEVKHTTKKPWRQKGTGRARAGMSS. Basic and acidic residues predominate over residues 49-58; the sequence is KQKDREEVKH. The segment covering 59-70 has biased composition (basic residues); that stretch reads TTKKPWRQKGTG.

It belongs to the universal ribosomal protein uL4 family. As to quaternary structure, part of the 50S ribosomal subunit.

One of the primary rRNA binding proteins, this protein initially binds near the 5'-end of the 23S rRNA. It is important during the early stages of 50S assembly. It makes multiple contacts with different domains of the 23S rRNA in the assembled 50S subunit and ribosome. Functionally, forms part of the polypeptide exit tunnel. In Ralstonia nicotianae (strain ATCC BAA-1114 / GMI1000) (Ralstonia solanacearum), this protein is Large ribosomal subunit protein uL4.